A 109-amino-acid chain; its full sequence is MEICKRVEQVDFEKMNGLIPTIVQDYKTKEVLMLAYMSKESLNKTLEDNTTWFYSRSRDELWNKGATSGHFQYVKEIKIDCDNDTILILAEQVGAACHTGNRTCFYRDL.

Aspartate 80 is a Mg(2+) binding site. Cysteine 81 serves as a coordination point for Zn(2+). Aspartate 82 and aspartate 84 together coordinate Mg(2+). Residues cysteine 97 and cysteine 104 each contribute to the Zn(2+) site.

This sequence belongs to the PRA-CH family. Homodimer. The cofactor is Mg(2+). Zn(2+) serves as cofactor.

It localises to the cytoplasm. The enzyme catalyses 1-(5-phospho-beta-D-ribosyl)-5'-AMP + H2O = 1-(5-phospho-beta-D-ribosyl)-5-[(5-phospho-beta-D-ribosylamino)methylideneamino]imidazole-4-carboxamide. The protein operates within amino-acid biosynthesis; L-histidine biosynthesis; L-histidine from 5-phospho-alpha-D-ribose 1-diphosphate: step 3/9. Functionally, catalyzes the hydrolysis of the adenine ring of phosphoribosyl-AMP. This is Phosphoribosyl-AMP cyclohydrolase from Clostridium beijerinckii (strain ATCC 51743 / NCIMB 8052) (Clostridium acetobutylicum).